Reading from the N-terminus, the 147-residue chain is TRAF-interacting protein with FHA domain-containing protein B (147 aa).

Residues 36–108 (LLVGRGQNTH…LGTINRISFS (73 aa)) enclose the FHA domain.

Interacts with TIFA. In terms of tissue distribution, expressed at high levels in spleen and at moderate levels in lung, thymus, and small intestine.

Its function is as follows. Inhibits TIFA-mediated TRAF6 activation possibly by inducing a conformational change in TIFA. The sequence is that of TRAF-interacting protein with FHA domain-containing protein B from Mus musculus (Mouse).